A 365-amino-acid polypeptide reads, in one-letter code: Protein RecA (365 aa).

73–80 (GPESSGKT) lines the ATP pocket.

Belongs to the RecA family.

It localises to the cytoplasm. Its function is as follows. Can catalyze the hydrolysis of ATP in the presence of single-stranded DNA, the ATP-dependent uptake of single-stranded DNA by duplex DNA, and the ATP-dependent hybridization of homologous single-stranded DNAs. It interacts with LexA causing its activation and leading to its autocatalytic cleavage. The sequence is that of Protein RecA from Prochlorococcus marinus (strain MIT 9312).